Here is a 649-residue protein sequence, read N- to C-terminus: Transmembrane and coiled-coil domains protein 1 (649 aa).

At Met-1 the chain carries N-acetylmethionine. Disordered stretches follow at residues 1 to 37 (MEPSGSEQLYEDPDPGGKSQDAEARRQTESEQKLSKM), 58 to 83 (HQRRRSSVSPHDVQQIQTDPEPEVDL), 110 to 166 (RVPP…PTSS), and 197 to 222 (LAQTSSAVASSTDGSIHTESVDGIPD). Over 1 to 587 (MEPSGSEQLY…ARNLLGKLIN (587 aa)) the chain is Cytoplasmic. A compositionally biased stretch (basic and acidic residues) spans 20 to 34 (QDAEARRQTESEQKL). The span at 64-75 (SVSPHDVQQIQT) shows a compositional bias: polar residues. The span at 113–125 (PKMKRGTSLHSRR) shows a compositional bias: basic residues. The segment covering 156-166 (SSSTTDAPTSS) has biased composition (low complexity). Polar residues predominate over residues 197-214 (LAQTSSAVASSTDGSIHT). Positions 224 to 310 (QRTKAAIAHL…KLREVEQNGI (87 aa)) form a coiled coil. Ser-378 and Ser-410 each carry phosphoserine. The tract at residues 411 to 433 (PKYGSEEDCSSATSGSVGANSTT) is disordered. Over residues 420–433 (SSATSGSVGANSTT) the composition is skewed to polar residues. Residues 457–566 (ALLHEVQEIR…KMELQQQQQQ (110 aa)) adopt a coiled-coil conformation. Transmembrane regions (helical) follow at residues 588–608 (ILLAVMAVLLVFVSTVANCVV) and 621–641 (LFLVAFIAFLWKHWDALFSYV). Over 642-649 (DRLFSPPR) the chain is Cytoplasmic.

This sequence belongs to the TEX28 family. May form homodimers and heterodimers with TMCC2 or TMCC3 via the coiled-coil domains. Interacts with ribosomal proteins RPL4 and RPS6.

It localises to the endoplasmic reticulum membrane. Functionally, endoplasmic reticulum membrane protein that promotes endoplasmic reticulum-associated endosome fission. Localizes to contact sites between the endoplasmic reticulum and endosomes and acts by promoting recruitment of the endoplasmic reticulum to endosome tubules for fission. Endosome membrane fission of early and late endosomes is essential to separate regions destined for lysosomal degradation from carriers to be recycled to the plasma membrane. In Mus musculus (Mouse), this protein is Transmembrane and coiled-coil domains protein 1 (Tmcc1).